The sequence spans 64 residues: Large ribosomal subunit protein bL35 (64 aa).

This sequence belongs to the bacterial ribosomal protein bL35 family.

The sequence is that of Large ribosomal subunit protein bL35 from Streptomyces avermitilis (strain ATCC 31267 / DSM 46492 / JCM 5070 / NBRC 14893 / NCIMB 12804 / NRRL 8165 / MA-4680).